A 336-amino-acid polypeptide reads, in one-letter code: 4-hydroxy-2-oxovalerate aldolase (336 aa).

A Pyruvate carboxyltransferase domain is found at 4–254 (PRLTDTTLRD…NPGLDVLALM (251 aa)). Residue 12-13 (RD) participates in substrate binding. Residue D13 coordinates Mn(2+). The Proton acceptor role is filled by H16. Positions 166 and 193 each coordinate substrate. Residues H193 and H195 each contribute to the Mn(2+) site. Y284 contacts substrate.

This sequence belongs to the 4-hydroxy-2-oxovalerate aldolase family.

It catalyses the reaction (S)-4-hydroxy-2-oxopentanoate = acetaldehyde + pyruvate. The polypeptide is 4-hydroxy-2-oxovalerate aldolase (Roseiflexus castenholzii (strain DSM 13941 / HLO8)).